Reading from the N-terminus, the 239-residue chain is Tryptophan synthase alpha chain (239 aa).

Residues Glu-34 and Asp-45 each act as proton acceptor in the active site.

This sequence belongs to the TrpA family. In terms of assembly, tetramer of two alpha and two beta chains.

The enzyme catalyses (1S,2R)-1-C-(indol-3-yl)glycerol 3-phosphate + L-serine = D-glyceraldehyde 3-phosphate + L-tryptophan + H2O. It functions in the pathway amino-acid biosynthesis; L-tryptophan biosynthesis; L-tryptophan from chorismate: step 5/5. Its function is as follows. The alpha subunit is responsible for the aldol cleavage of indoleglycerol phosphate to indole and glyceraldehyde 3-phosphate. The sequence is that of Tryptophan synthase alpha chain from Thermotoga petrophila (strain ATCC BAA-488 / DSM 13995 / JCM 10881 / RKU-1).